The primary structure comprises 312 residues: Ribonuclease H2 subunit B (312 aa).

Position 2 is an N-acetylalanine (A2). A disordered region spans residues 236-256 (EPSASLPNPPSKKIKLSDEPV). The residue at position 295 (K295) is an N6-acetyllysine. S296 carries the phosphoserine modification.

It belongs to the RNase H2 subunit B family. As to quaternary structure, the RNase H2 complex is a heterotrimer composed of the catalytic subunit RNASEH2A and the non-catalytic subunits RNASEH2B and RNASEH2C. In terms of tissue distribution, widely expressed.

It localises to the nucleus. Its function is as follows. Non catalytic subunit of RNase H2, an endonuclease that specifically degrades the RNA of RNA:DNA hybrids. Participates in DNA replication, possibly by mediating the removal of lagging-strand Okazaki fragment RNA primers during DNA replication. Mediates the excision of single ribonucleotides from DNA:RNA duplexes. The polypeptide is Ribonuclease H2 subunit B (RNASEH2B) (Homo sapiens (Human)).